A 178-amino-acid polypeptide reads, in one-letter code: Photosystem I assembly protein Ycf4 (178 aa).

The next 2 membrane-spanning stretches (helical) occupy residues 19–39 (FLVA…SLSS) and 61–81 (LVMG…WYVI).

This sequence belongs to the Ycf4 family.

Its subcellular location is the cellular thylakoid membrane. In terms of biological role, seems to be required for the assembly of the photosystem I complex. The sequence is that of Photosystem I assembly protein Ycf4 from Synechococcus sp. (strain CC9902).